Reading from the N-terminus, the 414-residue chain is Histidine--tRNA ligase (414 aa).

This sequence belongs to the class-II aminoacyl-tRNA synthetase family. In terms of assembly, homodimer.

It localises to the cytoplasm. It carries out the reaction tRNA(His) + L-histidine + ATP = L-histidyl-tRNA(His) + AMP + diphosphate + H(+). The polypeptide is Histidine--tRNA ligase (Mycoplasma mycoides subsp. mycoides SC (strain CCUG 32753 / NCTC 10114 / PG1)).